The primary structure comprises 251 residues: MRILIILSIILCSLFARADLEYVDNDIYNYNGGRNENGCLEVYDPYEKFNRKVFAFNSVLDYIILRPLAIGYKNITNDYVKARVNSFVSNVDTPLTAVNYGLQLNYDKTMKSVWRFLINTTLGIGGLFDVAGKVGLPSERQTFGSTLAHYGVAPGPYLVLPIIGSTNARDMTDSVITNYALNPLMYYTHNDFDLGVLAVSKINDRYVVLPFSDYVMKNSTDPYVAIRSALHRAREASVQYPENFKCPKPKN.

Positions 1–18 are cleaved as a signal peptide; sequence MRILIILSIILCSLFARA.

This sequence belongs to the MlaA family.

This is an uncharacterized protein from Rickettsia felis (strain ATCC VR-1525 / URRWXCal2) (Rickettsia azadi).